The chain runs to 100 residues: Large ribosomal subunit protein bL21 (100 aa).

The protein belongs to the bacterial ribosomal protein bL21 family. As to quaternary structure, part of the 50S ribosomal subunit. Contacts protein L20.

Functionally, this protein binds to 23S rRNA in the presence of protein L20. The chain is Large ribosomal subunit protein bL21 from Mycoplasma pneumoniae (strain ATCC 29342 / M129 / Subtype 1) (Mycoplasmoides pneumoniae).